The sequence spans 129 residues: MPKTVITPPGTGTPIAPFSPGTLADGIVYVSGTLAFDKDNNVAFPGDAEAQTRQVLETIKSVIETAGGTMEDVVMNHIFLTDWVHYAPMNKVYAEYFPGDKPARYCIQCGLVKPGFVVEIASVAHIGKP.

Belongs to the RutC family.

It carries out the reaction (Z)-3-aminoacrylate + H2O + H(+) = 3-oxopropanoate + NH4(+). Involved in pyrimidine catabolism. Catalyzes the deamination of 3-aminoacrylate to malonic semialdehyde, a reaction that can also occur spontaneously. RutC may facilitate the reaction and modulate the metabolic fitness, rather than catalyzing essential functions. The chain is 3-aminoacrylate deaminase RutC from Caulobacter segnis (strain ATCC 21756 / DSM 7131 / JCM 7823 / NBRC 15250 / LMG 17158 / TK0059) (Mycoplana segnis).